The sequence spans 326 residues: Protein spaetzle (326 aa).

The signal sequence occupies residues 1–25 (MMTPMWISLFKVLLLLFAFFATYEA). Asparagine 48 is a glycosylation site (N-linked (GlcNAc...) asparagine). The disordered stretch occupies residues 56 to 82 (FMPIPTQHDDPTQKQKQNQNQSPIPET). The segment covering 69-80 (KQKQNQNQSPIP) has biased composition (polar residues). N-linked (GlcNAc...) asparagine glycosylation is found at asparagine 114 and asparagine 164. The interval 152 to 174 (YRPPQSPARPLRNDTKEHNPCAK) is disordered. The segment covering 162 to 174 (LRNDTKEHNPCAK) has biased composition (basic and acidic residues). In terms of domain architecture, Spaetzle spans 228–322 (FLCRSIRKLV…FKIPSCCKCA (95 aa)). 3 disulfides stabilise this stretch: cysteine 230/cysteine 288, cysteine 267/cysteine 319, and cysteine 274/cysteine 321.

Homodimer; disulfide-linked. In the presence of Tl, crystal structures show one Tl molecule bound to a spaetzle C-106 homodimer. However, the active complex probably consists of two Tl molecules bound to a spaetzle C-106 homodimer. This is supported by in vitro experiments which also show binding of the spaetzle C-106 dimer to 2 Tl receptors. Ligand binding induces conformational changes in the extracellular domain of Tl. This may enable a secondary homodimerization interface at the C-terminus of the Tl extracellular domain. During embryonic development proteolytically processed by activated ea/easter; ea cleaves the signal peptide and also generates the C-terminal 12 kDa active ligand for the Toll receptor, C-106 (except for isoform 8.24 and isoform 11.27 as they do not contain the cleavage site). During the immune response, cleaved in the same manner by SPE. In terms of processing, extracellular forms of isoform 8.19 and isoform 11.7 are glycosylated.

It localises to the secreted. In terms of biological role, the activated form, spaetzle C-106, acts as a ligand for the Toll receptor. Binding to Toll activates the Toll signaling pathway and induces expression of the antifungal peptide drosomycin. Component of the extracellular signaling pathway that establishes dorsal-ventral polarity in the embryo. This is Protein spaetzle from Drosophila melanogaster (Fruit fly).